The following is a 291-amino-acid chain: Glycine--tRNA ligase alpha subunit (291 aa).

Belongs to the class-II aminoacyl-tRNA synthetase family. As to quaternary structure, tetramer of two alpha and two beta subunits.

The protein localises to the cytoplasm. It carries out the reaction tRNA(Gly) + glycine + ATP = glycyl-tRNA(Gly) + AMP + diphosphate. This is Glycine--tRNA ligase alpha subunit from Nitratidesulfovibrio vulgaris (strain DSM 19637 / Miyazaki F) (Desulfovibrio vulgaris).